Reading from the N-terminus, the 155-residue chain is Small ribosomal subunit protein uS7cz/uS7cy (155 aa).

The protein belongs to the universal ribosomal protein uS7 family. As to quaternary structure, part of the 30S ribosomal subunit.

It is found in the plastid. In terms of biological role, one of the primary rRNA binding proteins, it binds directly to 16S rRNA where it nucleates assembly of the head domain of the 30S subunit. The protein is Small ribosomal subunit protein uS7cz/uS7cy (rps7-A) of Cuscuta obtusiflora (Peruvian dodder).